The chain runs to 134 residues: Thioredoxin-like protein Clot (134 aa).

The Thioredoxin domain occupies 1 to 134 (MTLKKVDANP…LILPLLAPST (134 aa)). Catalysis depends on nucleophile residues C48 and C51. A disulfide bridge connects residues C48 and C51.

It belongs to the thioredoxin family.

Probable thiol-disulfide oxidoreductase that may participate in various redox reactions. This Arabidopsis thaliana (Mouse-ear cress) protein is Thioredoxin-like protein Clot.